The following is a 398-amino-acid chain: uncharacterized protein (398 aa).

Residues 1–22 (MKLKFYKLPLITTAFSFVFLTA) form the signal peptide. The N-palmitoyl cysteine moiety is linked to residue Cys23. Residue Cys23 is the site of S-diacylglycerol cysteine attachment.

The protein localises to the cell membrane. This is an uncharacterized protein from Mycoplasma genitalium (strain ATCC 33530 / DSM 19775 / NCTC 10195 / G37) (Mycoplasmoides genitalium).